A 975-amino-acid polypeptide reads, in one-letter code: Exocyst complex component 4 (975 aa).

Residue A2 is modified to N-acetylalanine. K9 bears the N6-acetyllysine mark. S32 bears the Phosphoserine mark. The stretch at 32-114 (STSDDVEDRE…HCKRDELRKL (83 aa)) forms a coiled coil. Positions 211–224 (RNKEKGKMSSHGKD) are enriched in basic and acidic residues. The interval 211 to 230 (RNKEKGKMSSHGKDPSPGPL) is disordered. Phosphoserine is present on S226. Residue T238 is modified to Phosphothreonine. A Phosphoserine modification is found at S469.

It belongs to the SEC8 family. The exocyst complex is composed of EXOC1, EXOC2, EXOC3, EXOC4, EXOC5, EXOC6, EXOC7 and EXOC8. Interacts with BIRC6/bruce. Interacts with MYRIP. Interacts with SH3BP1; required for the localization of both SH3BP1 and the exocyst to the leading edge of migrating cells. Interacts with SLC6A9. As to expression, expressed in the striatum (at protein level).

It localises to the midbody. The protein localises to the midbody ring. Its subcellular location is the cell projection. The protein resides in the cytoplasm. It is found in the cytoskeleton. It localises to the microtubule organizing center. The protein localises to the centrosome. Functionally, component of the exocyst complex involved in the docking of exocytic vesicles with fusion sites on the plasma membrane. The chain is Exocyst complex component 4 (Exoc4) from Mus musculus (Mouse).